Here is a 252-residue protein sequence, read N- to C-terminus: MKILVTNDDGVRAPGIRSLAEALRNIGDVVVVAPDRERSAVGHALTLHHPLRASEIRPAVFAVDGTPTDCVNLGIHTLLGSRPDIVVSGVNCGGNMGDDITYSGTVSAAMEATLMGIPALAVSLATSGRGDNYAVASAFAARLVRIVSERGLPPDTLLNVNVPDLPLEKLGGAVVTIQGKRDYEGKIVTKTDPRGRNYYWIGNGSLQFRDLEGTDYYAVKRGLVSITPLHLDLTNYASLTTLKTWDFAEMTL.

Residues aspartate 8, aspartate 9, serine 39, and asparagine 91 each contribute to the a divalent metal cation site.

The protein belongs to the SurE nucleotidase family. It depends on a divalent metal cation as a cofactor.

Its subcellular location is the cytoplasm. It catalyses the reaction a ribonucleoside 5'-phosphate + H2O = a ribonucleoside + phosphate. In terms of biological role, nucleotidase that shows phosphatase activity on nucleoside 5'-monophosphates. This chain is 5'-nucleotidase SurE, found in Geobacter metallireducens (strain ATCC 53774 / DSM 7210 / GS-15).